The chain runs to 143 residues: Large ribosomal subunit protein uL15 (143 aa).

Positions 1 to 54 are disordered; that stretch reads MELNSIKPADGAKHAARRVGRGIGSGLGKTAGRGHKGQKSRSGGYHKVGFEGGQ. Gly residues predominate over residues 21-31; it reads RGIGSGLGKTA.

The protein belongs to the universal ribosomal protein uL15 family. As to quaternary structure, part of the 50S ribosomal subunit.

Binds to the 23S rRNA. In Acidovorax ebreus (strain TPSY) (Diaphorobacter sp. (strain TPSY)), this protein is Large ribosomal subunit protein uL15.